We begin with the raw amino-acid sequence, 62 residues long: Large ribosomal subunit protein bL33 (62 aa).

The protein belongs to the bacterial ribosomal protein bL33 family.

The protein is Large ribosomal subunit protein bL33 of Phocaeicola vulgatus (strain ATCC 8482 / DSM 1447 / JCM 5826 / CCUG 4940 / NBRC 14291 / NCTC 11154) (Bacteroides vulgatus).